Here is a 210-residue protein sequence, read N- to C-terminus: Glutathione S-transferase P 1 (210 aa).

Residues P2–G81 enclose the GST N-terminal domain. Phosphotyrosine; by EGFR is present on Y4. Residues Y8, R14, W39, K45, and Q52–L53 each bind glutathione. Residue T62 is modified to Phosphothreonine. Q65–S66 is a glutathione binding site. The region spanning N83 to I204 is the GST C-terminal domain. N6-succinyllysine is present on residues K103 and K116. At K128 the chain carries N6-acetyllysine.

As to quaternary structure, homodimer. Interacts with CDK5. In terms of tissue distribution, ubiquitously expressed.

It localises to the cytoplasm. The protein resides in the mitochondrion. Its subcellular location is the nucleus. The catalysed reaction is RX + glutathione = an S-substituted glutathione + a halide anion + H(+). It carries out the reaction prostaglandin J2 + glutathione = prostaglandin J2-S-(R)-glutathione. The enzyme catalyses prostaglandin J2 + glutathione = prostaglandin J2-S-(S)-glutathione. It catalyses the reaction prostaglandin A2 + glutathione = prostaglandin A2-S-(S)-glutathione. The catalysed reaction is 11(S)-hydroxy-14(S),15(S)-epoxy-(5Z,8Z,12E)-eicosatrienoate + glutathione = (11S,15S)-dihydroxy-14(R)-S-glutathionyl-(5Z,8Z,12E)-eicosatrienoate. Conjugation of reduced glutathione to a wide number of exogenous and endogenous hydrophobic electrophiles. Involved in the formation of glutathione conjugates of both prostaglandin A2 (PGA2) and prostaglandin J2 (PGJ2). Participates in the formation of novel hepoxilin regioisomers. Negatively regulates CDK5 activity via p25/p35 translocation to prevent neurodegeneration. The sequence is that of Glutathione S-transferase P 1 from Mus musculus (Mouse).